Here is a 379-residue protein sequence, read N- to C-terminus: Acetylornithine aminotransferase (379 aa).

Residues 93 to 94 (GA) and Phe-120 each bind pyridoxal 5'-phosphate. Arg-123 serves as a coordination point for N(2)-acetyl-L-ornithine. Residue 205 to 208 (DEVQ) coordinates pyridoxal 5'-phosphate. Lys-234 is modified (N6-(pyridoxal phosphate)lysine). Ser-262 is a binding site for N(2)-acetyl-L-ornithine. Position 263 (Thr-263) interacts with pyridoxal 5'-phosphate.

This sequence belongs to the class-III pyridoxal-phosphate-dependent aminotransferase family. ArgD subfamily. In terms of assembly, homodimer. The cofactor is pyridoxal 5'-phosphate.

The protein localises to the cytoplasm. It catalyses the reaction N(2)-acetyl-L-ornithine + 2-oxoglutarate = N-acetyl-L-glutamate 5-semialdehyde + L-glutamate. It participates in amino-acid biosynthesis; L-arginine biosynthesis; N(2)-acetyl-L-ornithine from L-glutamate: step 4/4. The sequence is that of Acetylornithine aminotransferase from Streptococcus mutans serotype c (strain ATCC 700610 / UA159).